The primary structure comprises 231 residues: NADH-ubiquinone oxidoreductase chain 4 (231 aa).

6 helical membrane passes run 1–21 (PIAGSMVLAAILLKLGGYGII), 34–54 (MFLPFIVLALWGAILANLTCL), 63–85 (IAYSSISHMGLVVAAIIIQTPWG), 89–111 (AMALMIAHGFTSSALFCLANTTY), 128–148 (ILPMTTTWWLFVNLMNIAIPP), and 169–189 (TIIMLGLSMLITASYSLHMFL).

This sequence belongs to the complex I subunit 4 family.

Its subcellular location is the mitochondrion membrane. It catalyses the reaction a ubiquinone + NADH + 5 H(+)(in) = a ubiquinol + NAD(+) + 4 H(+)(out). In terms of biological role, core subunit of the mitochondrial membrane respiratory chain NADH dehydrogenase (Complex I) that is believed to belong to the minimal assembly required for catalysis. Complex I functions in the transfer of electrons from NADH to the respiratory chain. The immediate electron acceptor for the enzyme is believed to be ubiquinone. The sequence is that of NADH-ubiquinone oxidoreductase chain 4 (MT-ND4) from Deinagkistrodon acutus (Hundred-pace snake).